Consider the following 155-residue polypeptide: Ribonuclease H (155 aa).

The RNase H type-1 domain occupies 4–145; the sequence is QQKVVEIYTD…ADALARKAIT (142 aa). Mg(2+) contacts are provided by Asp13, Glu51, Asp73, and Asp137.

This sequence belongs to the RNase H family. Monomer. It depends on Mg(2+) as a cofactor.

The protein localises to the cytoplasm. It carries out the reaction Endonucleolytic cleavage to 5'-phosphomonoester.. Functionally, endonuclease that specifically degrades the RNA of RNA-DNA hybrids. The protein is Ribonuclease H of Bartonella quintana (strain Toulouse) (Rochalimaea quintana).